The following is a 629-amino-acid chain: Chaperone protein HtpG (629 aa).

The a; substrate-binding stretch occupies residues Met-1–Arg-343. A b region spans residues Glu-344 to Arg-558. Residues Met-559 to Val-629 form a c region.

It belongs to the heat shock protein 90 family. As to quaternary structure, homodimer.

The protein localises to the cytoplasm. In terms of biological role, molecular chaperone. Has ATPase activity. In Polaromonas naphthalenivorans (strain CJ2), this protein is Chaperone protein HtpG.